Consider the following 87-residue polypeptide: RNA-binding protein Hfq (87 aa).

The 60-residue stretch at 9 to 68 (DPFLNALRRERIPVSIYLVNGIKLQGQIESFDQFVILLKNTVNQMVYKHAISTVVPARPV) folds into the Sm domain. Positions 65 to 87 (ARPVSHHSGDRPQGDRPQEKSED) are disordered. The segment covering 71–87 (HSGDRPQGDRPQEKSED) has biased composition (basic and acidic residues).

The protein belongs to the Hfq family. As to quaternary structure, homohexamer.

In terms of biological role, RNA chaperone that binds small regulatory RNA (sRNAs) and mRNAs to facilitate mRNA translational regulation in response to envelope stress, environmental stress and changes in metabolite concentrations. Also binds with high specificity to tRNAs. This Vibrio parahaemolyticus serotype O3:K6 (strain RIMD 2210633) protein is RNA-binding protein Hfq.